The chain runs to 549 residues: Cytochrome bc1 complex cytochrome b subunit (549 aa).

A helical transmembrane segment spans residues 45–65 (FLLGEIALYSFVVLLITGVYL). Residues His114 and His128 each coordinate heme. Helical transmembrane passes span 118-138 (ALMFAAAIMVHLARIFFTGAF), 146-166 (WVIGSLLLILAMFEGYFGYSL), and 189-209 (VIGTWLHWALFGGDFPGTILI). His216 and His231 together coordinate heme. The next 5 membrane-spanning stretches (helical) occupy residues 217 to 237 (ILLLPGIILALIGLHLALVWF), 266 to 286 (SGAFFAAIVGVLGLMGGLLQI), 335 to 355 (PVWVAVIMGLVFVLLPAYPFL), 381 to 401 (IGAMAIAFYMVLTLAAMNDII), and 418 to 438 (IGMVILPPFVYFITYRWCIGL).

This sequence belongs to the cytochrome b family. The cytochrome bc1 complex is composed of a cytochrome b (QcrB), the Rieske iron-sulfur protein (QcrA) and a diheme cytochrome c (QcrC) subunit. It depends on heme as a cofactor.

The protein resides in the cell membrane. The enzyme catalyses a quinol + 2 Fe(III)-[cytochrome c](out) = a quinone + 2 Fe(II)-[cytochrome c](out) + 2 H(+)(out). Functionally, cytochrome b subunit of the cytochrome bc1 complex, an essential component of the respiratory electron transport chain required for ATP synthesis. The bc1 complex catalyzes the oxidation of ubiquinol and the reduction of cytochrome c in the respiratory chain. The bc1 complex operates through a Q-cycle mechanism that couples electron transfer to generation of the proton gradient that drives ATP synthesis. The cytochrome b subunit contains two ubiquinol reactive sites: the oxidation (QP) site and the reduction (QN) site. This chain is Cytochrome bc1 complex cytochrome b subunit (qcrB), found in Mycobacterium bovis (strain ATCC BAA-935 / AF2122/97).